A 152-amino-acid polypeptide reads, in one-letter code: Siroheme decarboxylase NirD subunit (152 aa).

Belongs to the Ahb/Nir family. In terms of assembly, probably forms a complex composed of NirD, NirL, NirG and NirH. All proteins are required for the total conversion of siroheme to didecarboxysiroheme.

The enzyme catalyses siroheme + 2 H(+) = 12,18-didecarboxysiroheme + 2 CO2. It participates in porphyrin-containing compound metabolism. Functionally, involved in heme d1 biosynthesis. Catalyzes the decarboxylation of siroheme into didecarboxysiroheme. This chain is Siroheme decarboxylase NirD subunit, found in Stutzerimonas stutzeri (Pseudomonas stutzeri).